Reading from the N-terminus, the 508-residue chain is UDP-N-acetylmuramoyl-L-alanyl-D-glutamate--L-lysine ligase (508 aa).

Residue Ser-47 coordinates UDP-N-acetyl-alpha-D-muramoyl-L-alanyl-D-glutamate. 124-130 (GTKGKTT) contributes to the ATP binding site. Residues 168 to 169 (TT), Ser-195, and Arg-203 each bind UDP-N-acetyl-alpha-D-muramoyl-L-alanyl-D-glutamate. At Lys-237 the chain carries N6-carboxylysine. An L-lysine recognition motif motif is present at residues 425-428 (DDPA).

It belongs to the MurCDEF family. MurE subfamily. In terms of processing, carboxylation is probably crucial for Mg(2+) binding and, consequently, for the gamma-phosphate positioning of ATP.

Its subcellular location is the cytoplasm. It catalyses the reaction UDP-N-acetyl-alpha-D-muramoyl-L-alanyl-D-glutamate + L-lysine + ATP = UDP-N-acetyl-alpha-D-muramoyl-L-alanyl-gamma-D-glutamyl-L-lysine + ADP + phosphate + H(+). It participates in cell wall biogenesis; peptidoglycan biosynthesis. Functionally, catalyzes the addition of L-lysine to the nucleotide precursor UDP-N-acetylmuramoyl-L-alanyl-D-glutamate (UMAG) in the biosynthesis of bacterial cell-wall peptidoglycan. This chain is UDP-N-acetylmuramoyl-L-alanyl-D-glutamate--L-lysine ligase, found in Enterococcus faecalis (strain ATCC 700802 / V583).